A 555-amino-acid polypeptide reads, in one-letter code: Developmental and secondary metabolism regulator veA (555 aa).

Disordered regions lie at residues 1-23 (MATR…RITR), 39-60 (ERAR…VDPP), and 234-533 (RRRG…TLLS). Residues 13-23 (ETEHSVSRITR) are compositionally biased toward basic and acidic residues. Residues 25–228 (GKRITYKLNV…AEQGCRVRIR (204 aa)) form the Velvet domain. The Nuclear localization signal signature appears at 39–44 (ERARAC). The span at 239–258 (KRSDDYDFDEERSHRGRIPD) shows a compositional bias: basic and acidic residues. Pro residues predominate over residues 311–331 (AIPPAPAPAPPSSSTPTPVAP). Composition is skewed to polar residues over residues 336-372 (RSSS…TQVY) and 380-389 (HARNPSTSTE). Positions 439–479 (QTPSNAAPSLPPIASISAEYSNNLPQPPSNLAPSPNREPRG) are PEST. 2 stretches are compositionally biased toward basic and acidic residues: residues 492–503 (RPHEDAFSHSER) and 519–533 (ADRR…TLLS).

It belongs to the velvet family. VeA subfamily. As to quaternary structure, component of the heterotrimeric velvet complex composed of laeA, veA and velB; VeA acting as a bridging protein between laeA and velB.

The protein localises to the nucleus. Its subcellular location is the cytoplasm. In terms of biological role, component of the velvet transcription factor complex that controls sexual/asexual developmental ratio in response to light, promoting sexual development in the darkness while stimulating asexual sporulation under illumination. The velvet complex hat acts as a global regulator for secondary metabolite gene expression. Increases spore dispersing capacity by impacting conidiophore architecture. The protein is Developmental and secondary metabolism regulator veA of Aspergillus niger (strain ATCC 1015 / CBS 113.46 / FGSC A1144 / LSHB Ac4 / NCTC 3858a / NRRL 328 / USDA 3528.7).